Reading from the N-terminus, the 299-residue chain is Ubiquinol-cytochrome c reductase complex assembly factor 1 (299 aa).

This sequence belongs to the CBP3 family. In terms of assembly, interacts with UQCC2. Interacts with UQCC3. Forms a complex, named COMB/coordinator of mitochondrial CYTB biogenesis, composed of UQCC1, UQCC2, UQCC4, UQCC5 and UQCC6; stabilizes nascent cytochrome b/MT-CYB and promotes its membrane insertion. Forms a complex, named COMB/coordinator of mitochondrial CYTB biogenesis, composed of UQCC1, UQCC2, UQCC4, UQCC5 and UQCC6; stabilizes nascent cytochrome b/MT-CYB and promotes its membrane insertion. Forms a complex, named COMA, composed of UQCC1, UQCC2 and UQCC4; activates MT-CYB translation. Forms a complex, named COMC, composed of UQCC1, UQCC2; UQCC3 and UQCC4; mediates MT-CYB hemylation and association with the first nuclear-encoded CIII subunit UQCRQ.

The protein resides in the mitochondrion inner membrane. It localises to the cytoplasmic vesicle. Functionally, required for the assembly of the ubiquinol-cytochrome c reductase complex (mitochondrial respiratory chain complex III or cytochrome b-c1 complex). Involved in cytochrome b translation and/or stability. The polypeptide is Ubiquinol-cytochrome c reductase complex assembly factor 1 (UQCC1) (Homo sapiens (Human)).